Consider the following 263-residue polypeptide: 3-methyl-2-oxobutanoate hydroxymethyltransferase (263 aa).

Positions 45 and 84 each coordinate Mg(2+). 3-methyl-2-oxobutanoate is bound by residues 45 to 46 (DS), aspartate 84, and lysine 112. Residue glutamate 114 participates in Mg(2+) binding. Glutamate 181 (proton acceptor) is an active-site residue.

This sequence belongs to the PanB family. In terms of assembly, homodecamer; pentamer of dimers. Mg(2+) serves as cofactor.

Its subcellular location is the cytoplasm. The enzyme catalyses 3-methyl-2-oxobutanoate + (6R)-5,10-methylene-5,6,7,8-tetrahydrofolate + H2O = 2-dehydropantoate + (6S)-5,6,7,8-tetrahydrofolate. It functions in the pathway cofactor biosynthesis; (R)-pantothenate biosynthesis; (R)-pantoate from 3-methyl-2-oxobutanoate: step 1/2. Its function is as follows. Catalyzes the reversible reaction in which hydroxymethyl group from 5,10-methylenetetrahydrofolate is transferred onto alpha-ketoisovalerate to form ketopantoate. The sequence is that of 3-methyl-2-oxobutanoate hydroxymethyltransferase from Buchnera aphidicola subsp. Acyrthosiphon pisum (strain 5A).